A 344-amino-acid polypeptide reads, in one-letter code: L-threonine 3-dehydrogenase (344 aa).

Cysteine 38 is a Zn(2+) binding site. Residues threonine 40 and histidine 43 each act as charge relay system in the active site. Zn(2+)-binding residues include histidine 63, glutamate 64, cysteine 93, cysteine 96, cysteine 99, and cysteine 107. NAD(+) contacts are provided by residues isoleucine 175, aspartate 195, arginine 200, 263 to 265, and 287 to 288; these read LGI and IY.

This sequence belongs to the zinc-containing alcohol dehydrogenase family. In terms of assembly, homotetramer. Requires Zn(2+) as cofactor.

It is found in the cytoplasm. The enzyme catalyses L-threonine + NAD(+) = (2S)-2-amino-3-oxobutanoate + NADH + H(+). It functions in the pathway amino-acid degradation; L-threonine degradation via oxydo-reductase pathway; glycine from L-threonine: step 1/2. In terms of biological role, catalyzes the NAD(+)-dependent oxidation of L-threonine to 2-amino-3-ketobutyrate. In Deinococcus deserti (strain DSM 17065 / CIP 109153 / LMG 22923 / VCD115), this protein is L-threonine 3-dehydrogenase.